We begin with the raw amino-acid sequence, 174 residues long: RNA pyrophosphohydrolase (174 aa).

One can recognise a Nudix hydrolase domain in the interval 6-149; the sequence is GFRANVGIII…KRDVYRKVMK (144 aa). A Nudix box motif is present at residues 38-59; sequence GGVDDGESAEEAMYRELYEEVG.

It belongs to the Nudix hydrolase family. RppH subfamily. The cofactor is a divalent metal cation.

Accelerates the degradation of transcripts by removing pyrophosphate from the 5'-end of triphosphorylated RNA, leading to a more labile monophosphorylated state that can stimulate subsequent ribonuclease cleavage. The polypeptide is RNA pyrophosphohydrolase (Shewanella sp. (strain ANA-3)).